A 1225-amino-acid polypeptide reads, in one-letter code: RNA-directed RNA polymerase VP2 (1225 aa).

In terms of domain architecture, RdRp catalytic spans 497-727 (LFLSFMPYTI…NSIVLLQQLV (231 aa)).

Belongs to the reoviridae RNA-directed RNA polymerase family. In terms of assembly, interacts with VP6.

It catalyses the reaction RNA(n) + a ribonucleoside 5'-triphosphate = RNA(n+1) + diphosphate. Its function is as follows. RNA-directed RNA polymerase that is involved in transcription and genome replication. Following infection, it catalyzes the synthesis of fully conservative plus strands. After core assembly, which consists in recruitment of one capped plus-strand for each genomic segments and polymerase complexes, the polymerase switches mode and catalyzes the synthesis of complementary minus-strands. The sequence is that of RNA-directed RNA polymerase VP2 (S2) from Lymantria dispar (Gypsy moth).